Reading from the N-terminus, the 348-residue chain is Phosphate acyltransferase (348 aa).

Belongs to the PlsX family. Homodimer. Probably interacts with PlsY.

Its subcellular location is the cytoplasm. The catalysed reaction is a fatty acyl-[ACP] + phosphate = an acyl phosphate + holo-[ACP]. It participates in lipid metabolism; phospholipid metabolism. Its function is as follows. Catalyzes the reversible formation of acyl-phosphate (acyl-PO(4)) from acyl-[acyl-carrier-protein] (acyl-ACP). This enzyme utilizes acyl-ACP as fatty acyl donor, but not acyl-CoA. The sequence is that of Phosphate acyltransferase from Synechocystis sp. (strain ATCC 27184 / PCC 6803 / Kazusa).